The chain runs to 989 residues: Atos homolog protein A (989 aa).

A transactivation domain 1 (TAD1) region spans residues 24–32 (TLLITEGRT). 4 disordered regions span residues 244 to 295 (GEGG…LPPG), 393 to 477 (PDAL…KPAT), 525 to 639 (QNEQ…GLTQ), and 656 to 686 (EAEK…TPAN). A compositionally biased stretch (low complexity) spans 254–270 (RSSLRLPRSPLFSRSLH). Residues 397–412 (FTSQEPPGHKTTWNST) show a composition bias toward polar residues. 2 stretches are compositionally biased toward basic and acidic residues: residues 413 to 423 (QDKECLKKSKD) and 460 to 471 (TRLDRVDRESKT). Composition is skewed to polar residues over residues 525 to 544 (QNEQ…VSLS) and 600 to 638 (TKSQ…NGLT). Residues 656–675 (EAEKHVRDGSTCLEKDENQE) are compositionally biased toward basic and acidic residues. A compositionally biased stretch (polar residues) spans 676–686 (PHSSLSSTPAN). Residues 792 to 849 (LLGNFEECVLNYRLEPLGTVEGFTAEVGASGTFCPSHMTLPVDVSFYSVSDDNAPSPY) form a required for macropage invasion region. Positions 876 to 884 (FNPNKTVVK) are transactivation domain 2 (TAD2).

This sequence belongs to the ATOS family.

It localises to the nucleus. Transcription regulator that syncronizes transcriptional and translational programs to promote macrophage invasion of tissues. The sequence is that of Atos homolog protein A (atosa) from Danio rerio (Zebrafish).